A 119-amino-acid chain; its full sequence is Large ribosomal subunit protein uL18 (119 aa).

It belongs to the universal ribosomal protein uL18 family. As to quaternary structure, part of the 50S ribosomal subunit; part of the 5S rRNA/L5/L18/L25 subcomplex. Contacts the 5S and 23S rRNAs.

Functionally, this is one of the proteins that bind and probably mediate the attachment of the 5S RNA into the large ribosomal subunit, where it forms part of the central protuberance. The sequence is that of Large ribosomal subunit protein uL18 from Micrococcus luteus (Micrococcus lysodeikticus).